We begin with the raw amino-acid sequence, 848 residues long: DNA mismatch repair protein MutS (848 aa).

ATP is bound at residue 605 to 612 (GPNMAGKS).

The protein belongs to the DNA mismatch repair MutS family.

This protein is involved in the repair of mismatches in DNA. It is possible that it carries out the mismatch recognition step. This protein has a weak ATPase activity. The sequence is that of DNA mismatch repair protein MutS from Leptospira interrogans serogroup Icterohaemorrhagiae serovar copenhageni (strain Fiocruz L1-130).